A 562-amino-acid polypeptide reads, in one-letter code: Glutamyl-tRNA(Gln) amidotransferase subunit B, chloroplastic/mitochondrial (562 aa).

The segment at 48–76 is disordered; the sequence is SVASNSKREPRPVKTRVMTQERGSGETQT. Polar residues predominate over residues 64 to 76; sequence VMTQERGSGETQT.

This sequence belongs to the GatB/GatE family. GatB subfamily. Subunit of the heterotrimeric GatCAB amidotransferase (AdT) complex, composed of A, B and C subunits.

Its subcellular location is the mitochondrion. The protein localises to the plastid. It localises to the chloroplast. It carries out the reaction L-glutamyl-tRNA(Gln) + L-glutamine + ATP + H2O = L-glutaminyl-tRNA(Gln) + L-glutamate + ADP + phosphate + H(+). Functionally, allows the formation of correctly charged Gln-tRNA(Gln) through the transamidation of misacylated Glu-tRNA(Gln) in chloroplasts and mitochondria. The reaction takes place in the presence of glutamine and ATP through an activated gamma-phospho-Glu-tRNA(Gln). The protein is Glutamyl-tRNA(Gln) amidotransferase subunit B, chloroplastic/mitochondrial of Physcomitrium patens (Spreading-leaved earth moss).